Reading from the N-terminus, the 261-residue chain is Non-homologous end joining protein Ku 1 (261 aa).

One can recognise a Ku domain in the interval Ser12 to Val171.

Belongs to the prokaryotic Ku family. Homodimer. Interacts with LigD.

Its function is as follows. With LigD forms a non-homologous end joining (NHEJ) DNA repair enzyme, which repairs dsDNA breaks with reduced fidelity. Binds linear dsDNA with 5'- and 3'- overhangs but not closed circular dsDNA nor ssDNA. Recruits and stimulates the ligase activity of LigD. This is Non-homologous end joining protein Ku 1 from Geotalea uraniireducens (strain Rf4) (Geobacter uraniireducens).